The sequence spans 496 residues: RNA-binding motif protein, Y chromosome, family 1 member E (496 aa).

Residues 8-85 (GKLFIGGLNR…KAIKVEQAKK (78 aa)) enclose the RRM domain. Disordered regions lie at residues 67 to 348 (DMNG…PHRD) and 453 to 496 (DQRN…SSRY). Low complexity-rich tracts occupy residues 97-114 (PASSRNRSPSGSLRSARG) and 149-159 (PVKRGPSSRSG). Residues 175–184 (NSWMGSQGPM) are compositionally biased toward polar residues. 6 stretches are compositionally biased toward basic and acidic residues: residues 204 to 214 (RNDRMSTRHDG), 242 to 253 (DNGHSNRDEHSS), 276 to 289 (AYRDYGHSRRDESY), 313 to 326 (GYRDYGHSRRHESY), 335 to 348 (SSRETRDYAPPHRD), and 484 to 496 (GESRSEKGDSSRY).

Interacts with splicing factor proteins SFRS3/SRP20, TRA2B/SFRS10, KHDRBS1/SAM68 and KHDRBS3. As to expression, testis-specific.

Its subcellular location is the nucleus. RNA-binding protein which may be involved in spermatogenesis. Required for sperm development, possibly by participating in pre-mRNA splicing in the testis. The sequence is that of RNA-binding motif protein, Y chromosome, family 1 member E (RBMY1E) from Homo sapiens (Human).